Reading from the N-terminus, the 340-residue chain is Phosphoribosylformylglycinamidine cyclo-ligase (340 aa).

Belongs to the AIR synthase family.

The protein resides in the cytoplasm. The catalysed reaction is 2-formamido-N(1)-(5-O-phospho-beta-D-ribosyl)acetamidine + ATP = 5-amino-1-(5-phospho-beta-D-ribosyl)imidazole + ADP + phosphate + H(+). It functions in the pathway purine metabolism; IMP biosynthesis via de novo pathway; 5-amino-1-(5-phospho-D-ribosyl)imidazole from N(2)-formyl-N(1)-(5-phospho-D-ribosyl)glycinamide: step 2/2. The chain is Phosphoribosylformylglycinamidine cyclo-ligase from Streptococcus sanguinis (strain SK36).